We begin with the raw amino-acid sequence, 330 residues long: Adenylate isopentenyltransferase 8, chloroplastic (330 aa).

Residues 1 to 35 (MQNLTSTFVSPSMIPITSPRLRLPPPRSVVPMTTV) constitute a chloroplast transit peptide. 50–57 (GATGSGKS) contacts ATP.

The protein belongs to the IPP transferase family. Expressed in roots and in immature seeds with highest expression in the chalazal endosperm.

Its subcellular location is the plastid. It localises to the chloroplast. It catalyses the reaction dimethylallyl diphosphate + ADP = N(6)-(dimethylallyl)adenosine 5'-diphosphate + diphosphate. The catalysed reaction is dimethylallyl diphosphate + ATP = N(6)-(dimethylallyl)adenosine 5'-triphosphate + diphosphate. Involved in cytokinin biosynthesis. Catalyzes the transfer of an isopentenyl group from dimethylallyl diphosphate (DMAPP) to ATP and ADP. The chain is Adenylate isopentenyltransferase 8, chloroplastic (IPT8) from Arabidopsis thaliana (Mouse-ear cress).